Here is an 86-residue protein sequence, read N- to C-terminus: Toxin Td1 (86 aa).

The first 20 residues, 1-20 (MIRFILFISCFFLIGMVIEC), serve as a signal peptide directing secretion. The LCN-type CS-alpha/beta domain maps to 21–83 (KDGYLMEPNG…VWERATNRCG (63 aa)). Intrachain disulfides connect C31-C82, C35-C57, C43-C63, and C47-C65. Residue K84 is modified to Lysine amide.

Expressed by the venom gland.

It is found in the secreted. Beta toxins bind voltage-independently at site-4 of sodium channels (Nav) and shift the voltage of activation toward more negative potentials thereby affecting sodium channel activation and promoting spontaneous and repetitive firing. This Tityus discrepans (Venezuelan scorpion) protein is Toxin Td1.